We begin with the raw amino-acid sequence, 239 residues long: MIKVLIVDDEPLARENLRILLQGQDDIEIVGECANAVEAIGAVHKLRPDVLFLDIQMPRISGLEMVGMLDPEHRPYIVFLTAFDEYAIKAFEEHAFDYLLKPIEEKRLEKTLHRLRQERSKQDVSLLPENQQALKFIPCTGHSRIYLLQMDDVAFVSSRMSGVYVTSSEGKEGFTELTLRTLESRTPLLRCHRQFLVNMAHLQEIRLEDNGQAELILRNGLTVPVSRRYLKSLKEAIGL.

The Response regulatory domain occupies 3–116; sequence KVLIVDDEPL…RLEKTLHRLR (114 aa). A 4-aspartylphosphate modification is found at Asp-54. Residues 137–239 form the HTH LytTR-type domain; the sequence is IPCTGHSRIY…LKSLKEAIGL (103 aa).

Phosphorylated by BtsS.

Member of the two-component regulatory system BtsS/BtsR. BtsR regulates expression of btsT by binding to its promoter region. This is Transcriptional regulatory protein BtsR from Salmonella typhimurium (strain LT2 / SGSC1412 / ATCC 700720).